The following is a 564-amino-acid chain: Dihydroxy-acid dehydratase (564 aa).

Residue aspartate 80 coordinates Mg(2+). Cysteine 121 provides a ligand contact to [2Fe-2S] cluster. Positions 122 and 123 each coordinate Mg(2+). At lysine 123 the chain carries N6-carboxylysine. Cysteine 194 is a binding site for [2Fe-2S] cluster. Glutamate 447 serves as a coordination point for Mg(2+). The Proton acceptor role is filled by serine 473.

It belongs to the IlvD/Edd family. Homodimer. Requires [2Fe-2S] cluster as cofactor. Mg(2+) serves as cofactor.

The catalysed reaction is (2R)-2,3-dihydroxy-3-methylbutanoate = 3-methyl-2-oxobutanoate + H2O. It catalyses the reaction (2R,3R)-2,3-dihydroxy-3-methylpentanoate = (S)-3-methyl-2-oxopentanoate + H2O. It functions in the pathway amino-acid biosynthesis; L-isoleucine biosynthesis; L-isoleucine from 2-oxobutanoate: step 3/4. It participates in amino-acid biosynthesis; L-valine biosynthesis; L-valine from pyruvate: step 3/4. Functions in the biosynthesis of branched-chain amino acids. Catalyzes the dehydration of (2R,3R)-2,3-dihydroxy-3-methylpentanoate (2,3-dihydroxy-3-methylvalerate) into 2-oxo-3-methylpentanoate (2-oxo-3-methylvalerate) and of (2R)-2,3-dihydroxy-3-methylbutanoate (2,3-dihydroxyisovalerate) into 2-oxo-3-methylbutanoate (2-oxoisovalerate), the penultimate precursor to L-isoleucine and L-valine, respectively. The protein is Dihydroxy-acid dehydratase of Listeria monocytogenes serotype 4a (strain HCC23).